A 228-amino-acid polypeptide reads, in one-letter code: Delta-type opioid receptor (228 aa).

The helical transmembrane segment at 1-3 threads the bilayer; the sequence is GIV. Residues 4–13 are Cytoplasmic-facing; sequence RYTKMKTATN. The chain crosses the membrane as a helical span at residues 14-38; the sequence is IYIFNLALADALATSTLPFQSAKYL. Over 39–50 the chain is Extracellular; it reads METWPFGELLCK. Cys49 and Cys126 are oxidised to a cystine. Residues 51-72 traverse the membrane as a helical segment; that stretch reads AVLSIDYYNMFTSIFTLTMMSV. At 73-91 the chain is on the cytoplasmic side; sequence DRYIAVCHPVKALDFRTPA. The chain crosses the membrane as a helical span at residues 92 to 114; sequence KAKLINICIWVLASGVGVPIMVM. Topologically, residues 115 to 134 are extracellular; that stretch reads AVTRPRDGAVVCMLQFPSPS. The chain crosses the membrane as a helical span at residues 135 to 166; the sequence is WYWDTVTKICVFLFAFVVPILVITVCYGLMLL. The Cytoplasmic segment spans residues 167-189; the sequence is RLRSVRLLSGSKEKDRSLRRITR. Residues 190 to 212 traverse the membrane as a helical segment; the sequence is MVLVVVGAFVVCWAPIHIFVIVW. The Extracellular segment spans residues 213 to 227; that stretch reads TLVDIDRRDPLVVAA.

The protein belongs to the G-protein coupled receptor 1 family. As to quaternary structure, may form homooligomers. Forms a heterodimer with OPRM1. Interacts with GPRASP1. Interacts with RTP4; the interaction promotes cell surface localization of the OPRD1-OPRM1 heterodimer. In terms of processing, ubiquitinated. A basal ubiquitination seems not to be related to degradation. Ubiquitination is increased upon formation of OPRM1:OPRD1 oligomers leading to proteasomal degradation; the ubiquitination is diminished by RTP4. As to expression, detected in myenteric plexus and smooth muscle (at protein level). Detected in brain and intestine.

Its subcellular location is the cell membrane. In terms of biological role, G-protein coupled receptor that functions as a receptor for endogenous enkephalins and for a subset of other opioids. Ligand binding causes a conformation change that triggers signaling via guanine nucleotide-binding proteins (G proteins) and modulates the activity of down-stream effectors, such as adenylate cyclase. Signaling leads to the inhibition of adenylate cyclase activity. Inhibits neurotransmitter release by reducing calcium ion currents and increasing potassium ion conductance. Plays a role in the perception of pain and in opiate-mediated analgesia. Plays a role in developing analgesic tolerance to morphine. This is Delta-type opioid receptor (OPRD1) from Sus scrofa (Pig).